A 148-amino-acid chain; its full sequence is Vascular endothelial growth factor homolog (148 aa).

The first 25 residues, 1 to 25 (MKLTATLQVVVALLICMYNLPECVS), serve as a signal peptide directing secretion. 3 cysteine pairs are disulfide-bonded: cysteine 46/cysteine 88, cysteine 77/cysteine 130, and cysteine 81/cysteine 132. Asparagine 95 is a glycosylation site (N-linked (GlcNAc...) asparagine; by host).

It belongs to the PDGF/VEGF growth factor family. Homodimer; disulfide-linked.

It localises to the secreted. Functionally, induces endothelial proliferation. The chain is Vascular endothelial growth factor homolog from Orf virus (strain NZ7) (OV NZ-7).